The following is a 218-amino-acid chain: Pyridoxine/pyridoxamine 5'-phosphate oxidase (218 aa).

Substrate contacts are provided by residues 14-17 and Lys-72; that span reads RREY. FMN is bound by residues 67–72, 82–83, Arg-88, Lys-89, and Gln-111; these read RIVLLK and YT. 3 residues coordinate substrate: Tyr-129, Arg-133, and Ser-137. Residues 146–147 and Trp-191 each bind FMN; that span reads QS. 197-199 contributes to the substrate binding site; that stretch reads RLH. Arg-201 contacts FMN.

This sequence belongs to the pyridoxamine 5'-phosphate oxidase family. In terms of assembly, homodimer. The cofactor is FMN.

It carries out the reaction pyridoxamine 5'-phosphate + O2 + H2O = pyridoxal 5'-phosphate + H2O2 + NH4(+). The catalysed reaction is pyridoxine 5'-phosphate + O2 = pyridoxal 5'-phosphate + H2O2. It functions in the pathway cofactor metabolism; pyridoxal 5'-phosphate salvage; pyridoxal 5'-phosphate from pyridoxamine 5'-phosphate: step 1/1. It participates in cofactor metabolism; pyridoxal 5'-phosphate salvage; pyridoxal 5'-phosphate from pyridoxine 5'-phosphate: step 1/1. In terms of biological role, catalyzes the oxidation of either pyridoxine 5'-phosphate (PNP) or pyridoxamine 5'-phosphate (PMP) into pyridoxal 5'-phosphate (PLP). The sequence is that of Pyridoxine/pyridoxamine 5'-phosphate oxidase from Escherichia coli O7:K1 (strain IAI39 / ExPEC).